The chain runs to 81 residues: Photosystem I iron-sulfur center (81 aa).

4Fe-4S ferredoxin-type domains follow at residues 2 to 31 (SHSV…MIPW) and 39 to 68 (IAPA…VRVY). C11, C14, C17, C21, C48, C51, C54, and C58 together coordinate [4Fe-4S] cluster.

In terms of assembly, the eukaryotic PSI reaction center is composed of at least 11 subunits. The cofactor is [4Fe-4S] cluster.

It is found in the plastid. Its subcellular location is the chloroplast thylakoid membrane. The enzyme catalyses reduced [plastocyanin] + hnu + oxidized [2Fe-2S]-[ferredoxin] = oxidized [plastocyanin] + reduced [2Fe-2S]-[ferredoxin]. Its function is as follows. Apoprotein for the two 4Fe-4S centers FA and FB of photosystem I (PSI); essential for photochemical activity. FB is the terminal electron acceptor of PSI, donating electrons to ferredoxin. The C-terminus interacts with PsaA/B/D and helps assemble the protein into the PSI complex. Required for binding of PsaD and PsaE to PSI. PSI is a plastocyanin-ferredoxin oxidoreductase, converting photonic excitation into a charge separation, which transfers an electron from the donor P700 chlorophyll pair to the spectroscopically characterized acceptors A0, A1, FX, FA and FB in turn. The polypeptide is Photosystem I iron-sulfur center (Drimys granadensis).